The primary structure comprises 494 residues: E3 ubiquitin-protein ligase ari-1.1 (494 aa).

Residues 1–30 show a composition bias toward acidic residues; it reads MSSDDEINMDDSDSSQGEIDDGCMSDDDGI. The segment at 1 to 52 is disordered; that stretch reads MSSDDEINMDDSDSSQGEIDDGCMSDDDGIVLESREQNSSDYKDNGEPDNEV. The span at 33–52 shows a compositional bias: basic and acidic residues; the sequence is ESREQNSSDYKDNGEPDNEV. The tract at residues 124 to 331 is TRIAD supradomain; it reads GDAECDICCS…SSWYSCNRFD (208 aa). 18 residues coordinate Zn(2+): Cys128, Cys131, Cys142, His144, Cys147, Cys150, Cys169, Cys174, Cys214, Cys219, Cys235, Cys237, Cys242, Cys245, His250, Cys255, Cys282, and Cys285. An RING-type 1 zinc finger spans residues 128–174; that stretch reads CDICCSLGELSGLSCNHRACTQCWKAYLTNKIANNAQSEIECMAPNC. An IBR-type zinc finger spans residues 194–255; that stretch reads ATYRKLIVAS…GHDWHEPVNC (62 aa). The RING-type 2; atypical zinc finger occupies 282–313; sequence CPKCMITIEKDGGCNHMTCKNTACRFEFCWMC. Cys295 is a catalytic residue. The Zn(2+) site is built by Cys300, Cys305, Cys310, Cys313, His320, and Cys327. An ariadne domain region spans residues 346–494; it reads RANLQRYLFY…ADQELWVFNE (149 aa).

It belongs to the RBR family. Ariadne subfamily. As to quaternary structure, interacts with ubiquitin-conjugating enzyme E2 ubc-18.

It is found in the nucleus. It localises to the cytoplasm. It catalyses the reaction [E2 ubiquitin-conjugating enzyme]-S-ubiquitinyl-L-cysteine + [acceptor protein]-L-lysine = [E2 ubiquitin-conjugating enzyme]-L-cysteine + [acceptor protein]-N(6)-ubiquitinyl-L-lysine.. Autoinhibited by the ariadne domain, which masks the second RING-type zinc finger that contains the active site and inhibits the E3 activity. In terms of biological role, E3 ubiquitin-protein transferase, which catalyzes ubiquitination of target proteins together with ubiquitin-conjugating enzyme E2 ubc-18. Acts with ubc-18 to regulate pharyngeal development. In Caenorhabditis elegans, this protein is E3 ubiquitin-protein ligase ari-1.1.